A 63-amino-acid polypeptide reads, in one-letter code: Bucandin (63 aa).

Disulfide bonds link C3–C24, C6–C11, C17–C39, C43–C55, and C56–C61.

Expressed by the venom gland.

It localises to the secreted. Its function is as follows. This toxin is described as enhancing presynaptic acetylcholine release, but neither experimental results, nor references to other sources are available. This Bungarus candidus (Malayan krait) protein is Bucandin.